A 728-amino-acid polypeptide reads, in one-letter code: Polyribonucleotide nucleotidyltransferase (728 aa).

Positions 509 and 515 each coordinate Mg(2+). One can recognise a KH domain in the interval 576-638; it reads TKIYTFYIPK…TKLKIAILKI (63 aa). An S1 motif domain is found at 648–715; that stretch reads GTIYKAKVKN…KFRKIKLSHK (68 aa).

This sequence belongs to the polyribonucleotide nucleotidyltransferase family. The cofactor is Mg(2+).

The protein localises to the cytoplasm. The enzyme catalyses RNA(n+1) + phosphate = RNA(n) + a ribonucleoside 5'-diphosphate. Involved in mRNA degradation. Catalyzes the phosphorolysis of single-stranded polyribonucleotides processively in the 3'- to 5'-direction. The polypeptide is Polyribonucleotide nucleotidyltransferase (Karelsulcia muelleri (strain GWSS) (Sulcia muelleri)).